The primary structure comprises 665 residues: MSSQDLYANAATDKPLMQVKGLIREFKAGEQTIRVLHDINLTIHQGEMVAIIGQSGSGKSTLMNILGCLDQATAGDYQVFGQSVNRLVPDELAKLRREHFGFIFQRYHLLGDISARDNVSVPAVYAGMDGQARNERAEKLLSDLGLADKVNNRPSQLSGGQQQRVSIARALMNGGDIILADEPTGALDSKSGKDVVQILKDLNAQGHTIIMVTHDPSLAAQAERVIEIKDGYIIADYKNEDYQRPAAQPASIIDKHRKSAFGSFIDRLLESFKMSLLAMRAHKMRTLLTMLGIIIGIASVVSVVGLGKGSQEQILSNISSLGTNTITVTDGYPYGDPRRQYNDDNLTPQDAQAVADQPYVLSVSPQLNSNMSVRYRNVQEAASISGVGKDYLDVSGETLAMGQGFDEQSILRRTQDIIIDSNAHKTFFPTIANPIGEVLLIGSVPGRVIGVLEPNEGGFSRSVDTPTLYMPYTTMMSRLIGSAYIESFIALIDNNISSSAAESAISDLMTSRHGTDDFRIRNSDSIRQTIESTTAALTLLISSIAIISLIVGGIGVMNIMLVSVTERTNEIGVRMAVGARQSDIMQQFLIEAILVCILGGLLGIGLAFAIGELINRVGGDSFKVIYSSTSIIAAFVCSTLIGVVFGFLPARNAAKLDPVEALSRD.

Positions 17-255 (MQVKGLIREF…AAQPASIIDK (239 aa)) constitute an ABC transporter domain. ATP is bound at residue 53-60 (GQSGSGKS). Helical transmembrane passes span 287–307 (LLTMLGIIIGIASVVSVVGLG), 544–564 (IAIISLIVGGIGVMNIMLVSV), 588–608 (FLIEAILVCILGGLLGIGLAF), and 630–650 (SIIAAFVCSTLIGVVFGFLPA).

This sequence belongs to the ABC transporter superfamily. Macrolide exporter (TC 3.A.1.122) family. Homodimer. Part of the tripartite efflux system MacAB-TolC, which is composed of an inner membrane transporter, MacB, a periplasmic membrane fusion protein, MacA, and an outer membrane component, TolC. The complex forms a large protein conduit and can translocate molecules across both the inner and outer membranes. Interacts with MacA.

Its subcellular location is the cell inner membrane. Part of the tripartite efflux system MacAB-TolC. MacB is a non-canonical ABC transporter that contains transmembrane domains (TMD), which form a pore in the inner membrane, and an ATP-binding domain (NBD), which is responsible for energy generation. Confers resistance against macrolides. In Psychrobacter cryohalolentis (strain ATCC BAA-1226 / DSM 17306 / VKM B-2378 / K5), this protein is Macrolide export ATP-binding/permease protein MacB.